The following is a 458-amino-acid chain: ATP synthase subunit beta (458 aa).

148–155 (GGAGVGKT) contacts ATP.

Belongs to the ATPase alpha/beta chains family. As to quaternary structure, F-type ATPases have 2 components, CF(1) - the catalytic core - and CF(0) - the membrane proton channel. CF(1) has five subunits: alpha(3), beta(3), gamma(1), delta(1), epsilon(1). CF(0) has three main subunits: a(1), b(2) and c(9-12). The alpha and beta chains form an alternating ring which encloses part of the gamma chain. CF(1) is attached to CF(0) by a central stalk formed by the gamma and epsilon chains, while a peripheral stalk is formed by the delta and b chains.

The protein resides in the cell inner membrane. It catalyses the reaction ATP + H2O + 4 H(+)(in) = ADP + phosphate + 5 H(+)(out). Its function is as follows. Produces ATP from ADP in the presence of a proton gradient across the membrane. The catalytic sites are hosted primarily by the beta subunits. In Pseudomonas entomophila (strain L48), this protein is ATP synthase subunit beta.